The primary structure comprises 932 residues: Lon protease homolog 2, peroxisomal (932 aa).

The Lon N-terminal domain occupies 11–260 (LSLVPLPKGS…RVVDILNKQN (250 aa)). Residues 298 to 328 (RRGIPGASGTPPPGLGGRNNEADEKESNELD) form a disordered region. The span at 317–328 (NEADEKESNELD) shows a compositional bias: basic and acidic residues. 486–493 (GPPGTGKT) lines the ATP pocket. The Lon proteolytic domain occupies 729–916 (HGRPGVVTGL…WEAIRHIWPD (188 aa)). Catalysis depends on residues S822 and K865. Residues 930-932 (SRL) carry the Microbody targeting signal motif.

Belongs to the peptidase S16 family.

It is found in the peroxisome matrix. The enzyme catalyses Hydrolysis of proteins in presence of ATP.. In terms of biological role, ATP-dependent serine protease that mediates the selective degradation of misfolded and unassembled polypeptides in the peroxisomal matrix. Necessary for type 2 peroxisome targeting signal (PTS2)-containing protein processing and facilitates peroxisome matrix protein import. This Emericella nidulans (strain FGSC A4 / ATCC 38163 / CBS 112.46 / NRRL 194 / M139) (Aspergillus nidulans) protein is Lon protease homolog 2, peroxisomal.